Consider the following 33-residue polypeptide: U1-pseudomyrmecitoxin-Pt1 subunit LS1 (33 aa).

Belongs to the myrmexin family. In terms of assembly, heterodimer composed of subunit LS1 and subunit SS1 (U1-PSDTX-Pt1b), heterodimer composed of subunit LS1 and SS2 (U1-PSDTX-Pt1b), and heterodimer composed of subunit LS1 and SS3; disulfide-linked. Expressed by the venom gland.

It localises to the secreted. Its function is as follows. This heterodimer may have anti-inflammatory properties, since the myrmexin complex (composed of 6 SS-LS heterodimers) inhibits carrageenin-induced edema in a dose-dependent manner (after subcutaneous injection into rats). The sequence is that of U1-pseudomyrmecitoxin-Pt1 subunit LS1 from Pseudomyrmex triplarinus (Ant).